A 697-amino-acid polypeptide reads, in one-letter code: T-related protein (697 aa).

The segment at 1-60 (MTTSHILSAVDPTTGLSGNVSGGGGGGGAGGGAGSGSPQHVTHNGHGHGHGLGGVAAVSG) is disordered. Gly residues-rich tracts occupy residues 20–35 (VSGG…GAGS) and 50–60 (HGLGGVAAVSG). The T-box DNA-binding region spans 96 to 264 (LWLRFQNLTN…YNPFAKAFLD (169 aa)). Positions 316 to 330 (SVSSAESVGPSSGGS) are enriched in low complexity. Disordered regions lie at residues 316–407 (SVSS…GGIG) and 462–488 (VCSG…TSSP). Residues 337-351 (SLSSRSVAPTRTTPY) are compositionally biased toward polar residues. Low complexity-rich tracts occupy residues 352–373 (SRPR…SSTS), 381–401 (QTPT…VSSS), and 469–488 (SSHN…TSSP).

The protein resides in the nucleus. Functionally, required for the specification of the hindgut and anal pads. The protein is T-related protein (byn) of Drosophila melanogaster (Fruit fly).